The sequence spans 240 residues: Lysoplasmalogenase TMEM86A (240 aa).

Residues 1-21 (MVSPVTVVKSEGPKLVPFFKA) are Cytoplasmic-facing. Residues 22–42 (TCVYFVLWLPSSSPSWVSTLI) form a helical membrane-spanning segment. Lys43 is a topological domain (extracellular). Residues 44–64 (CLPIFCLWLFLLAHGLGFLLA) form a helical membrane-spanning segment. The Cytoplasmic portion of the chain corresponds to 65-70 (HPSATR). A helical membrane pass occupies residues 71-91 (IFVGLVFSAVGDAFLIWQDQG). Tyr92 is a topological domain (extracellular). A helical transmembrane segment spans residues 93 to 113 (FVHGLLMFAVTHMFYASAFGM). Over 114–115 (QP) the chain is Cytoplasmic. A helical membrane pass occupies residues 116 to 136 (LALRTGLVMAALSGLCYALLY). Topologically, residues 137–138 (PC) are extracellular. A helical transmembrane segment spans residues 139–159 (LSGAFTYLVGVYVALIGFMGW). The Cytoplasmic segment spans residues 160 to 174 (RAMAGLRLAGADWRW). Residues 175 to 195 (TELAAGSGALFFIISDLTIAL) traverse the membrane as a helical segment. Over 196 to 206 (NKFCFPVPYSR) the chain is Extracellular. A helical transmembrane segment spans residues 207–227 (ALIMSTYYVAQMLVALSAVES). At 228–240 (REPVEHYRLTKAN) the chain is on the cytoplasmic side.

Belongs to the TMEM86 family. Expressed in the macrophages.

The protein localises to the endoplasmic reticulum membrane. It carries out the reaction a 1-O-(1Z-alkenyl)-sn-glycero-3-phosphocholine + H2O = a 2,3-saturated aldehyde + sn-glycerol 3-phosphocholine. The catalysed reaction is a 1-O-(1Z-alkenyl)-sn-glycero-3-phosphoethanolamine + H2O = a 2,3-saturated aldehyde + sn-glycero-3-phosphoethanolamine. Catalyzes the hydrolysis of the vinyl ether bond of choline or ethanolamine lysoplasmalogens, forming fatty aldehyde and glycerophosphocholine or glycerophosphoethanolamine, respectively and is specific for the sn-2-deacylated (lyso) form of plasmalogen. Plays an important role in lysoplasmalogen metabolism in the adipocyte tissue and macrophages. In Homo sapiens (Human), this protein is Lysoplasmalogenase TMEM86A (TMEM86A).